The primary structure comprises 184 residues: Crossover junction endodeoxyribonuclease RuvC (184 aa).

Catalysis depends on residues Asp7, Glu68, and Asp141. Mg(2+) is bound by residues Asp7, Glu68, and Asp141.

The protein belongs to the RuvC family. Homodimer which binds Holliday junction (HJ) DNA. The HJ becomes 2-fold symmetrical on binding to RuvC with unstacked arms; it has a different conformation from HJ DNA in complex with RuvA. In the full resolvosome a probable DNA-RuvA(4)-RuvB(12)-RuvC(2) complex forms which resolves the HJ. Mg(2+) is required as a cofactor.

Its subcellular location is the cytoplasm. The enzyme catalyses Endonucleolytic cleavage at a junction such as a reciprocal single-stranded crossover between two homologous DNA duplexes (Holliday junction).. Its function is as follows. The RuvA-RuvB-RuvC complex processes Holliday junction (HJ) DNA during genetic recombination and DNA repair. Endonuclease that resolves HJ intermediates. Cleaves cruciform DNA by making single-stranded nicks across the HJ at symmetrical positions within the homologous arms, yielding a 5'-phosphate and a 3'-hydroxyl group; requires a central core of homology in the junction. The consensus cleavage sequence is 5'-(A/T)TT(C/G)-3'. Cleavage occurs on the 3'-side of the TT dinucleotide at the point of strand exchange. HJ branch migration catalyzed by RuvA-RuvB allows RuvC to scan DNA until it finds its consensus sequence, where it cleaves and resolves the cruciform DNA. In Mycobacterium ulcerans (strain Agy99), this protein is Crossover junction endodeoxyribonuclease RuvC.